The primary structure comprises 131 residues: Large ribosomal subunit protein bL19 (131 aa).

The span at 1-11 (MEETMNNQEAP) shows a compositional bias: polar residues. A disordered region spans residues 1-20 (MEETMNNQEAPETSEEETVA).

Belongs to the bacterial ribosomal protein bL19 family.

Its function is as follows. This protein is located at the 30S-50S ribosomal subunit interface and may play a role in the structure and function of the aminoacyl-tRNA binding site. The protein is Large ribosomal subunit protein bL19 of Dehalococcoides mccartyi (strain ATCC BAA-2100 / JCM 16839 / KCTC 5957 / BAV1).